Reading from the N-terminus, the 510-residue chain is Maturase K (510 aa).

Belongs to the intron maturase 2 family. MatK subfamily.

It is found in the plastid. The protein resides in the chloroplast. Functionally, usually encoded in the trnK tRNA gene intron. Probably assists in splicing its own and other chloroplast group II introns. The sequence is that of Maturase K from Mammillaria haageana (Cactus).